The sequence spans 77 residues: uncharacterized protein (77 aa).

Helical transmembrane passes span 3-23 and 35-55; these read FNFI…SFLF and IGAI…VALL.

The protein resides in the cell membrane. This is an uncharacterized protein from Haemophilus influenzae (strain ATCC 51907 / DSM 11121 / KW20 / Rd).